The primary structure comprises 906 residues: Protein translocase subunit SecA (906 aa).

Residues Gln-86, 104–108 (GEGKT), and Asp-499 contribute to the ATP site. Residues 834–847 (KLQKNMRESREDPA) show a composition bias toward basic and acidic residues. Residues 834 to 887 (KLQKNMRESREDPAFSKYNAGSSLETDLKPVVSRVDPKDRNPDDPTSWGRVSRN) are disordered. Positions 890, 892, 901, and 902 each coordinate Zn(2+).

The protein belongs to the SecA family. In terms of assembly, monomer and homodimer. Part of the essential Sec protein translocation apparatus which comprises SecA, SecYEG and auxiliary proteins SecDF-YajC and YidC. It depends on Zn(2+) as a cofactor.

The protein resides in the cell inner membrane. The protein localises to the cytoplasm. The enzyme catalyses ATP + H2O + cellular proteinSide 1 = ADP + phosphate + cellular proteinSide 2.. Functionally, part of the Sec protein translocase complex. Interacts with the SecYEG preprotein conducting channel. Has a central role in coupling the hydrolysis of ATP to the transfer of proteins into and across the cell membrane, serving both as a receptor for the preprotein-SecB complex and as an ATP-driven molecular motor driving the stepwise translocation of polypeptide chains across the membrane. This is Protein translocase subunit SecA from Rickettsia felis (strain ATCC VR-1525 / URRWXCal2) (Rickettsia azadi).